The sequence spans 325 residues: Tagatose 1,6-diphosphate aldolase 1 (325 aa).

Belongs to the aldolase LacD family.

The enzyme catalyses D-tagatofuranose 1,6-bisphosphate = D-glyceraldehyde 3-phosphate + dihydroxyacetone phosphate. Its pathway is carbohydrate metabolism; D-tagatose 6-phosphate degradation; D-glyceraldehyde 3-phosphate and glycerone phosphate from D-tagatose 6-phosphate: step 2/2. This chain is Tagatose 1,6-diphosphate aldolase 1 (lacD1), found in Streptococcus pyogenes serotype M3 (strain SSI-1).